Consider the following 521-residue polypeptide: Cytochrome P450 1A1 (521 aa).

A substrate-binding site is contributed by Phe-229. Cys-463 provides a ligand contact to heme.

This sequence belongs to the cytochrome P450 family. Heme serves as cofactor.

The protein localises to the endoplasmic reticulum membrane. It localises to the microsome membrane. It carries out the reaction an organic molecule + reduced [NADPH--hemoprotein reductase] + O2 = an alcohol + oxidized [NADPH--hemoprotein reductase] + H2O + H(+). In terms of biological role, cytochromes P450 are a group of heme-thiolate monooxygenases. They oxidize a variety of structurally unrelated compounds, including steroids, fatty acids, and xenobiotics. This is Cytochrome P450 1A1 (cyp1a1) from Chelon auratus (Golden grey mullet).